We begin with the raw amino-acid sequence, 203 residues long: MEIISSKRFILLTLATSSFLTSNTLCSDELMMPHFHSKEGYGKYYQLRGIPKGVKERSVTFQELKDWGAKKDIKMSPAPANKVPHSAANLPLRFGRNIEDRRSPRARANMEAGTMSHFPSLPQRFGRTTARRITKTLAGLPQKSLHSLASSELLYAMTRQHQEIQSPGQEQPRKRVFTETDDAERKQEKIGNLQPVLQGAMKL.

Positions 1-26 (MEIISSKRFILLTLATSSFLTSNTLC) are cleaved as a signal peptide. Residues 27–57 (SDELMMPHFHSKEGYGKYYQLRGIPKGVKER) constitute a propeptide that is removed on maturation. Phe94 is subject to Phenylalanine amide. The propeptide occupies 97–106 (NIEDRRSPRA). Position 125 is a phenylalanine amide (Phe125). A propeptide spanning residues 128 to 203 (TTARRITKTL…QPVLQGAMKL (76 aa)) is cleaved from the precursor. A disordered region spans residues 161–186 (HQEIQSPGQEQPRKRVFTETDDAERK). A compositionally biased stretch (basic and acidic residues) spans 171 to 186 (QPRKRVFTETDDAERK).

It belongs to the FARP (FMRFamide related peptide) family. As to expression, isoform 1 is expressed at high levels in the hypothalamus and eye. Isoform 2 is specifically expressed in a region between the dorsomedial hypothalamic and ventromedial hypothalamic nuclei.

The protein resides in the secreted. Its function is as follows. Efficiently inhibits forskolin-induced production of cAMP. Acts as a potent negative regulator of gonadotropin synthesis and secretion. Induces secretion of prolactin. Functionally, efficiently inhibits forskolin-induced production of cAMP. Blocks morphine-induced analgesia. This chain is Pro-FMRFamide-related neuropeptide VF (Npvf), found in Rattus norvegicus (Rat).